Reading from the N-terminus, the 480-residue chain is ATP synthase subunit beta, chloroplastic (480 aa).

161-168 (GGAGVGKT) lines the ATP pocket.

The protein belongs to the ATPase alpha/beta chains family. F-type ATPases have 2 components, CF(1) - the catalytic core - and CF(0) - the membrane proton channel. CF(1) has five subunits: alpha(3), beta(3), gamma(1), delta(1), epsilon(1). CF(0) has four main subunits: a(1), b(1), b'(1) and c(9-12).

The protein localises to the plastid. It localises to the chloroplast thylakoid membrane. The enzyme catalyses ATP + H2O + 4 H(+)(in) = ADP + phosphate + 5 H(+)(out). Produces ATP from ADP in the presence of a proton gradient across the membrane. The catalytic sites are hosted primarily by the beta subunits. The polypeptide is ATP synthase subunit beta, chloroplastic (Tetradesmus obliquus (Green alga)).